The chain runs to 653 residues: MDPNGSGAGPESHDAAFHAAPDRQRLENVVIRFAGDSGDGMQLTGDRFTSEAALFGNDLATQPNYPAEIRAPAGTLPGVSSFQIQIADYDILTAGDRPDVLVAMNPAALKANIGDLPLGGMVIVNSDEFTKRNLTKVGYVTNPLESGELSDYVVHTVAMTTLTLGAVEAIGASKKDGQRAKNMFALGLLSWMYGRELEHSEAFIREKFARKPEIAEANVLALKAGWNYGETTEAFGTTYEIPPATLPPGEYRQISGNTALAYGIVVAGQLAGLPVVLGSYPITPASDILHELSKHKNFNVVTFQAEDEIGGICAALGAAYGGALGVTSTSGPGISLKSEALGLGVMTELPLLVIDVQRGGPSTGLPTKTEQADLLQALYGRNGESPVAVLAPRSPADCFETALEAVRIAVSYHTPVILLSDGAIANGSEPWRIPDVNALPPIKHTFAKPGEPFQPYARDRETLARQFAIPGTPGLEHRIGGLEAANGSGDISYEPTNHDLMVRLRQAKIDGIHVPDLEVDDPTGDAELLLIGWGSSYGPIGEACRRARRRGTKVAHAHLRYLNPFPANLGEVLRRYPKVVAPELNLGQLAQVLRGKYLVDVQSVTKVKGVSFLADEIGRFIRAALAGRLAELEQDKTLVARLSAATAGAGANG.

Residues methionine 1–proline 21 are disordered. Over residues glutamate 11–proline 21 the composition is skewed to basic and acidic residues.

In terms of assembly, KG oxidoreductase (KOR) is composed of KorA and KorB subunits.

It carries out the reaction 2 oxidized [2Fe-2S]-[ferredoxin] + 2-oxoglutarate + CoA = succinyl-CoA + 2 reduced [2Fe-2S]-[ferredoxin] + CO2 + H(+). It participates in carbohydrate metabolism; tricarboxylic acid cycle. Its function is as follows. Component of KG oxidoreductase (KOR) that catalyzes the CoA-dependent oxidative decarboxylation of 2-oxoglutarate (alpha-ketoglutarate, KG) to succinyl-CoA. Methyl viologen can act as electron acceptor in vitro; the physiologic electron acceptor is unknown. Is involved in the alternative TCA pathway that functions concurrently with fatty acid beta-oxidation. Since a growing body of evidence indicates that lipids (for example cholesterol and fatty acids) are a predominant growth substrate for M.tuberculosis during infection, flux through KOR likely represents an important step in intermediary metabolism in vivo. KOR-dependent decarboxylation of KG also appears to be an important source of CO(2) in M.tuberculosis metabolism. The polypeptide is 2-oxoglutarate oxidoreductase subunit KorA (korA) (Mycobacterium tuberculosis (strain ATCC 25618 / H37Rv)).